Here is a 336-residue protein sequence, read N- to C-terminus: Dihydroorotate dehydrogenase (quinone) (336 aa).

Residues 62–66 and Thr86 each bind FMN; that span reads AGLDK. Lys66 is a substrate binding site. Residue 111–115 coordinates substrate; the sequence is NRMGF. Asn139 and Asn172 together coordinate FMN. Asn172 contributes to the substrate binding site. The active-site Nucleophile is the Ser175. Asn177 lines the substrate pocket. 2 residues coordinate FMN: Lys217 and Thr245. Position 246–247 (246–247) interacts with substrate; the sequence is NT. FMN contacts are provided by residues Gly268, Gly297, and 318 to 319; that span reads YS.

This sequence belongs to the dihydroorotate dehydrogenase family. Type 2 subfamily. Monomer. FMN is required as a cofactor.

It is found in the cell membrane. It catalyses the reaction (S)-dihydroorotate + a quinone = orotate + a quinol. It participates in pyrimidine metabolism; UMP biosynthesis via de novo pathway; orotate from (S)-dihydroorotate (quinone route): step 1/1. Catalyzes the conversion of dihydroorotate to orotate with quinone as electron acceptor. In Yersinia pseudotuberculosis serotype O:1b (strain IP 31758), this protein is Dihydroorotate dehydrogenase (quinone).